The primary structure comprises 295 residues: Transcription factor MYB34 (295 aa).

2 HTH myb-type domains span residues 9-61 (EEGI…ANYL) and 62-116 (RPDI…KKRL). 2 consecutive DNA-binding regions (H-T-H motif) follow at residues 37-61 (WRTLPEKAGLKRCGKSCRLRWANYL) and 89-112 (WAAIATSLAGRTDNEIKNYWNTNL).

Can form complexes with MYC2, MYC3 or MYC4. Expressed in trichomes.

The protein resides in the nucleus. In terms of biological role, transcription factor involved in tryptophan gene activation and in indole-3-acetic acid (IAA) and indolic glucosinolates (IG) biosynthesis. Acts as a direct transcriptional activator of both Trp synthesis genes and Trp secondary metabolism genes. This chain is Transcription factor MYB34 (MYB34), found in Arabidopsis thaliana (Mouse-ear cress).